The following is a 313-amino-acid chain: Aspartoacylase (313 aa).

Residues His-21 and Glu-24 each contribute to the Zn(2+) site. 3 residues coordinate N-acetyl-L-aspartate: Arg-63, Asn-70, and Arg-71. Position 116 (His-116) interacts with Zn(2+). The N-acetyl-L-aspartate site is built by Tyr-164 and Arg-168. Glu-178 (proton donor/acceptor) is an active-site residue. Residue Tyr-288 participates in N-acetyl-L-aspartate binding.

It belongs to the AspA/AstE family. Aspartoacylase subfamily. Homodimer. Requires Zn(2+) as cofactor.

It localises to the cytoplasm. Its subcellular location is the nucleus. The enzyme catalyses an N-acyl-L-aspartate + H2O = a carboxylate + L-aspartate. It catalyses the reaction N-acetyl-L-aspartate + H2O = L-aspartate + acetate. Functionally, catalyzes the deacetylation of N-acetylaspartic acid (NAA) to produce acetate and L-aspartate. NAA occurs in high concentration in brain and its hydrolysis NAA plays a significant part in the maintenance of intact white matter. In other tissues it acts as a scavenger of NAA from body fluids. The sequence is that of Aspartoacylase from Pongo abelii (Sumatran orangutan).